A 142-amino-acid chain; its full sequence is Dynein light chain Tctex-type protein 2B (142 aa).

The protein belongs to the dynein light chain Tctex-type family. As to quaternary structure, light chain of the cytoplasmic dynein complex 2, a multisubunit complex composed at least of eleven different proteins. The cytoplasmic dynein 2 complex consists of two catalytic heavy chains (HCs) and a number of non-catalytic subunits presented by intermediate chains (ICs), light intermediate chains (LICs) and light chains (LCs). Among them, a heavy chain (DYNC2H1), two intermediate chains (DYNC2I2 and DYNC2I1), a light intermediate chain (DYNC2LI1), and a light chain (DYNLT2B) are unique to the dynein-2 complex, but a subset of the light chains are also shared by dynein-1 and dynein-2 complexes. Interacts with DYNC2I1. The dimer DYNLT2B-DYNLT1/DYNLT3 interacts with DYNC2I1; this interaction is crucial for retrograde trafficking of ciliary proteins.

Its subcellular location is the dynein axonemal particle. Functionally, acts as one of several non-catalytic accessory components of the cytoplasmic dynein 2 complex (dynein-2 complex), a motor protein complex that drives the movement of cargos along microtubules within cilia and flagella in concert with the intraflagellar transport (IFT) system. Required for proper retrograde ciliary transport. This is Dynein light chain Tctex-type protein 2B from Homo sapiens (Human).